A 1073-amino-acid chain; its full sequence is DNA-directed RNA polymerase subunit beta (1073 aa).

This sequence belongs to the RNA polymerase beta chain family. In plastids the minimal PEP RNA polymerase catalytic core is composed of four subunits: alpha, beta, beta', and beta''. When a (nuclear-encoded) sigma factor is associated with the core the holoenzyme is formed, which can initiate transcription.

Its subcellular location is the plastid. It is found in the chloroplast. It carries out the reaction RNA(n) + a ribonucleoside 5'-triphosphate = RNA(n+1) + diphosphate. In terms of biological role, DNA-dependent RNA polymerase catalyzes the transcription of DNA into RNA using the four ribonucleoside triphosphates as substrates. The polypeptide is DNA-directed RNA polymerase subunit beta (Aethionema cordifolium (Lebanon stonecress)).